We begin with the raw amino-acid sequence, 77 residues long: Liver-expressed antimicrobial peptide 2 (77 aa).

Positions 1–22 (MWHLKLFAVLVICLLLAVQVHG) are cleaved as a signal peptide. A propeptide spanning residues 23-37 (SPIPELSSAKRRPRR) is cleaved from the precursor. 2 disulfides stabilise this stretch: C54-C65 and C60-C70.

This sequence belongs to the LEAP2 family.

The protein localises to the secreted. Functionally, has an antimicrobial activity. In Sus scrofa (Pig), this protein is Liver-expressed antimicrobial peptide 2 (LEAP2).